The following is a 311-amino-acid chain: Mitochondrial arginine transporter BAC1 (311 aa).

Solcar repeat units follow at residues 12–101, 111–203, and 219–305; these read FGFY…AKLF, PRPE…LRYH, and VDMG…SMKM. A run of 6 helical transmembrane segments spans residues 18 to 38, 76 to 96, 113 to 133, 178 to 197, 222 to 242, and 288 to 308; these read YVAG…FDTV, GATS…GIYS, PEII…VLCP, GGSA…FTVY, GIGV…VLPF, and AFPA…MLGI.

Belongs to the mitochondrial carrier (TC 2.A.29) family. High expression in flowers and siliques. Lower expression in leaves and stems.

It localises to the mitochondrion inner membrane. Inhibited by mercuric chloride. Its function is as follows. Mitochondrial arginine transporter that catalyzes the counter-exchange of arginine with lysine, ornithine, arginine and histidine. Substrate preference in reconstituted proteoliposomes is arginine &gt; lysine &gt; ornithine &gt; histidine. May be involved in the delivery of arginine, released from seed reserves, to mitochondrial arginase and the export of ornithine. This Arabidopsis thaliana (Mouse-ear cress) protein is Mitochondrial arginine transporter BAC1 (BAC1).